We begin with the raw amino-acid sequence, 215 residues long: Urease accessory protein UreG (215 aa).

11-18 (GPVGAGKS) lines the GTP pocket.

It belongs to the SIMIBI class G3E GTPase family. UreG subfamily. As to quaternary structure, homodimer. UreD, UreF and UreG form a complex that acts as a GTP-hydrolysis-dependent molecular chaperone, activating the urease apoprotein by helping to assemble the nickel containing metallocenter of UreC. The UreE protein probably delivers the nickel.

It localises to the cytoplasm. Functionally, facilitates the functional incorporation of the urease nickel metallocenter. This process requires GTP hydrolysis, probably effectuated by UreG. This is Urease accessory protein UreG from Cenarchaeum symbiosum (strain A).